The sequence spans 304 residues: MSSCGVLVVAGTHGNEVNAPWLLQQWQANPDLIDAAGLAVQKVIGNPEALRRRCRYVDRDLNRCFLPEQLEQGASGLEFQRAGELLRLHGPSGEQPCAVAIDLHSTTAAMGNSLVVYGRRPADLALAALVQGALGLPIYLHEADAQQTGFLVESWPCGLVIEVGPVPQGLLNAGVVEQTRLGLESCLRALYQVRQELARLPDALVVHRHLGSRDLPKAENGEPQALVHPELQGRDWQNIASTQAMFRAADGTDRCEAWVGGEIPVFVNEAAYAEKSIAFSLTRREVWPVEPNWLLALKQLLAAA.

The Zn(2+) site is built by His13 and Glu16. Substrate is bound by residues Arg55 and 62–63 (NR). His104 is a binding site for Zn(2+). Substrate-binding residues include Glu162 and Tyr272.

This sequence belongs to the AspA/AstE family. Aspartoacylase subfamily. The cofactor is Zn(2+).

It carries out the reaction an N-acyl-L-aspartate + H2O = a carboxylate + L-aspartate. This chain is Probable aspartoacylase, found in Synechococcus sp. (strain CC9605).